A 286-amino-acid chain; its full sequence is Oxidase hkm6 (286 aa).

Residues histidine 16, histidine 25, and histidine 215 each coordinate Cu cation.

This sequence belongs to the tyrosinase family. It depends on Cu(2+) as a cofactor.

The protein operates within secondary metabolite biosynthesis. In terms of biological role, oxidase; part of the gene cluster that mediates the biosynthesis of hancockiamides, an unusual new family of N-cinnamoylated piperazines. The NRPS hkm10 and the NmrA-like reductase hkm9 are proposed to convert two molecules of L-Phe to the intermediary piperazine called xenocockiamide A. Xenocockiamide A is then converted to hancockiamide D via a series of hydroxylations and O-methylations. The tyrosinase hkm6 may catalyze an aromatic hydroxylation, then the 2-oxoglutarate-dependent Fe(II) dioxygenase hkm4 and the FAD-dependent phenol hydroxylase hkm7 may catalyze consecutive hydroxylations to install 2 more hydroxy groups, and the methyltransferase hkm8 probably catalyzes two methylations using 2 molecules of S-adenosyl-L-methionine (SAM). The NRPS hkm11 activates and transfers trans-cinnamate supplied by the PAL hkm12 to hancockiamide D and produces hancockiamide A. NRPS Hkm11 has the flexibility to tolerate the bulky hancockiamide G as a substrate and the absence of the acetyl-transferase hkm3 opens up the opportunity for hkm11 to introduce a second N-cinnamoyl moiety. The cytochrome P450 monooxygenase hkm5 catalyzes the methylenedioxy bridge formation, converting hancockiamide A into hancockiamide G. Hkm5 can also convert hancockiamide B into hancockiamide C, and hancockiamide D into hancockiamide H. The N-acetyltransferase hkm3 finally transfers an acetyl group to 1-N of piperazine, converting hancockiamide A into hancockiamide B and hancockiamide G into hancockiamide C. The chain is Oxidase hkm6 from Aspergillus hancockii.